A 79-amino-acid chain; its full sequence is Crassicorin-I (79 aa).

Residues 1 to 19 form the signal peptide; that stretch reads MKLFLVSIVLVGMLVLAAA. The propeptide occupies 20-39; sequence RPERDIDSFDEQEEKGFVKR. Cystine bridges form between C43–C76, C45–C69, and C59–C77.

The protein belongs to the sea anemone type 3 (BDS) potassium channel toxin family. In terms of tissue distribution, highly expressed by the mesenteries. Moderately expressed by the pharynx. Weakly expressed by the gonad and pedal disk. No expression in tentacle.

The protein localises to the secreted. It is found in the nematocyst. Functionally, peptide with both antimicrobial and neurotoxin activities. Cationic AMP with antibacterial activity against both Gram-positive bacteria (B.subtilis, MIC=11.49 ug/mL) and Gram-negative bacteria (E.coli (MIC=12.21 ug/mL) and S.enterica (MIC=11.95 ug/mL)). Shows no significant antimicrobial activity against bacteria S.aureus and P.aeruginosa, as well as the fungus C.albicans. In vivo, induces reversible paralytic activity towards the shrimp P.paucidens. May act by impairing sodium or potassium channels in the prey. The sequence is that of Crassicorin-I from Urticina crassicornis (Mottled anemone).